The chain runs to 179 residues: Large ribosomal subunit protein uL5 (179 aa).

Belongs to the universal ribosomal protein uL5 family. In terms of assembly, part of the 50S ribosomal subunit; part of the 5S rRNA/L5/L18/L25 subcomplex. Contacts the 5S rRNA and the P site tRNA. Forms a bridge to the 30S subunit in the 70S ribosome.

Functionally, this is one of the proteins that bind and probably mediate the attachment of the 5S RNA into the large ribosomal subunit, where it forms part of the central protuberance. In the 70S ribosome it contacts protein S13 of the 30S subunit (bridge B1b), connecting the 2 subunits; this bridge is implicated in subunit movement. Contacts the P site tRNA; the 5S rRNA and some of its associated proteins might help stabilize positioning of ribosome-bound tRNAs. This is Large ribosomal subunit protein uL5 from Pseudomonas fluorescens (strain SBW25).